The sequence spans 1597 residues: Rho guanine nucleotide exchange factor 5 (1597 aa).

3 disordered regions span residues 138–246, 258–455, and 467–1072; these read PFSS…EGTL, EEQM…SLEP, and GSFL…VFRE. Position 184 is a phosphoserine (S184). The span at 192–204 shows a compositional bias: polar residues; the sequence is ETNQNEGSESGTI. The segment covering 217–237 has biased composition (low complexity); it reads ESQGLLHPQEVQVLEEQGQQE. Basic and acidic residues predominate over residues 266-278; it reads NDEKGEQKQKQEQ. Positions 299-309 are enriched in acidic residues; that stretch reads GLNDGEWEQED. Composition is skewed to basic and acidic residues over residues 323-368 and 394-404; these read GEER…KEKG and RSREEENEHHG. Residues 428–438 show a composition bias toward polar residues; that stretch reads LMTQIPGTQTE. 2 positions are modified to phosphoserine: S445 and S450. Residues 474–490 show a composition bias toward basic and acidic residues; the sequence is SPDKEIDQNSQQEESRL. A compositionally biased stretch (pro residues) spans 512–522; sequence PRTPDSAPPSP. Composition is skewed to polar residues over residues 583-601 and 655-682; these read STGT…TVQH and DYST…NLER. The segment covering 731 to 746 has biased composition (basic and acidic residues); the sequence is QRRDTHPSVVETDGHA. 2 stretches are compositionally biased toward pro residues: residues 812-828 and 838-856; these read PLPP…PPIS and PLPP…PLPP. R866 carries the post-translational modification Asymmetric dimethylarginine. A compositionally biased stretch (low complexity) spans 901–920; it reads ATARSTESFTSTSRSKSEVS. Positions 926–941 are enriched in polar residues; sequence SNMTNFLCPSSPTTPW. The segment covering 950–969 has biased composition (basic and acidic residues); sequence SKDEAGVSEHPEAPAREPLR. A phosphoserine mark is found at S983, S1011, and S1044. Positions 990–1012 are enriched in basic and acidic residues; that stretch reads QPEKPSHLHLEKASSWPHRRDSG. Over residues 1057–1072 the composition is skewed to basic and acidic residues; the sequence is AVEKHPGPSDTVVFRE. The residue at position 1126 (S1126) is a Phosphoserine. In terms of domain architecture, DH spans 1174–1358; it reads KLQEVKFELI…EQLIRDCNNN (185 aa). Positions 1390 to 1502 constitute a PH domain; it reads WLVKSGELTA…WISALAMPRE (113 aa). In terms of domain architecture, SH3 spans 1510–1571; the sequence is YNSPQVQCLR…PVQQVEFISN (62 aa).

In terms of assembly, interacts with SRC. Forms a ternary complex with SRC and the PI3K 85 kDa subunit. Interacts with and is activated by the heterodimer formed by GNB1 and GNG2. Interacts with ODAM (via C-terminus). Interacts with RHOA. Post-translationally, activation of SRC induces tyrosine phosphorylation of ARHGEF5. As to expression, ubiquitously expressed with highest levels in placenta. High levels are also found in colon, kidney, trachea, prostate, liver, pancreas, pituitary gland, thyroid gland and mammary gland. In fetal tissues, expressed at high levels in kidney, lung and liver. Expressed at low levels in lung and heart.

It is found in the cytoplasm. The protein resides in the nucleus. The protein localises to the cell projection. Its subcellular location is the podosome. Guanine nucleotide exchange factor which activates Rho GTPases. Strongly activates RHOA. Also strongly activates RHOB, weakly activates RHOC and RHOG and shows no effect on RHOD, RHOV, RHOQ or RAC1. Involved in regulation of cell shape and actin cytoskeletal organization. Plays a role in actin organization by generating a loss of actin stress fibers and the formation of membrane ruffles and filopodia. Required for SRC-induced podosome formation. Involved in positive regulation of immature dendritic cell migration. The polypeptide is Rho guanine nucleotide exchange factor 5 (ARHGEF5) (Homo sapiens (Human)).